The following is a 711-amino-acid chain: Polyribonucleotide nucleotidyltransferase (711 aa).

Mg(2+) contacts are provided by Asp-486 and Asp-492. Residues 553–612 (PRIHTIKINPDKIKDVIGKGGSVIRALTEETGTTIEIEDDGTVKIAATDGEKAKHAIRRI) enclose the KH domain. The S1 motif domain maps to 622-690 (GRVYNGKVTR…RQGRIRLSIK (69 aa)). The segment at 689-711 (IKEATEQSQPAAAPEAPAAEQGE) is disordered. The span at 694–711 (EQSQPAAAPEAPAAEQGE) shows a compositional bias: low complexity.

The protein belongs to the polyribonucleotide nucleotidyltransferase family. As to quaternary structure, component of the RNA degradosome, which is a multiprotein complex involved in RNA processing and mRNA degradation. Requires Mg(2+) as cofactor.

The protein localises to the cytoplasm. The enzyme catalyses RNA(n+1) + phosphate = RNA(n) + a ribonucleoside 5'-diphosphate. Involved in mRNA degradation. Catalyzes the phosphorolysis of single-stranded polyribonucleotides processively in the 3'- to 5'-direction. The sequence is that of Polyribonucleotide nucleotidyltransferase from Escherichia coli O6:K15:H31 (strain 536 / UPEC).